Reading from the N-terminus, the 958-residue chain is Atromentin synthetase greA (958 aa).

The tract at residues 60 to 465 (SIQTKTFSAF…SGRIKDTVIV (406 aa)) is adenylation (A) domain. The 79-residue stretch at 597–675 (APSTETEKAL…SLANYVNALL (79 aa)) folds into the Carrier domain. A thiolation and peptide carrier (T) domain region spans residues 602–672 (TEKALAKIYA…VVSSLANYVN (71 aa)). Ser634 bears the O-(pantetheine 4'-phosphoryl)serine mark. A thioesterase (TE) domain region spans residues 698–946 (PIFFVHPGVG…MDFDHVPQFQ (249 aa)).

The protein belongs to the ATP-dependent AMP-binding enzyme family.

The protein operates within secondary metabolite biosynthesis. Its function is as follows. An L-tyrosine:2-oxoglutarate aminotransferase and atromentin synthetase greA catalyze consecutive steps to turn over L-tyrosine into atromentin, which represents the generic precursor molecule for the entire terphenylquinone and pulvinic acid family of pigments, which are widely distributed secondary metabolites in homobasidiomycetes. The first step catalyzed by the aminotransferase converts L-tyrosine in to 4-hydroxyphenylpyruvate (4-HPP). Adenylation of two 4-HPP monomers by the greA adenylation (A) domain, covalent tethering of the monomers as a thioester and oxoester onto the greA thiolation (T) and thioesterase (TE) domains, respectively, and symmetric C-C-bond formation between two monomers catalyzed by the greA TE domain leads to atromentin. This is Atromentin synthetase greA (greA) from Suillus grevillei (Larch bolete).